Reading from the N-terminus, the 569-residue chain is MSKDPMSKPTPEPAAHSKAGPAVPTNFLRPIVQADLDSGKHSKIITRFPPEPNGYLHIGHAKSICVNFGLAKEFGGDTHLRFDDTNPAKEDQEYIDAIMNDVKWLGFEWAGEVRYASQYFDQLHDWAVELIKAGKAYVDDLTPEQAREYRGTLTEPGKNSPFRERSVEENIDLFARMKAGEFEDGARVLRAKIDMASPNMNLRDPILYRIRHAHHHQTGDKWCIYPIYDFTHGQSDAIEGITHSICTLEFESHRPLYDWFLDNLPVPCKPRQYEFSRLNLNYTITSKRKLKQLVDEKHVNGWDDPRMSTLSGFRRRGYTPKSIRNFCEMIGTNRSDGVVDFGMLEFSIRDDLDHSAPRAMCVLRPLKVVITNYPEGQVEKLELPRHPKEDLGMRELPFSREIYIDRDDYMEEPPKGYKRLEPNGEVRLRGSYVIRADEAIKDADGNIVELRCSYDPDTLGKNPEGRKVKGVVHWVPAAESVECEVRLYDRLFRSANPEKAEDGASFLDNINPDSLQVLTGCRAEPSLGHAQPEDRFQFEREGYFCADIKDSKPGQPVFNRTVTLRDSWT.

A disordered region spans residues Met-1–Val-23. The 'HIGH' region signature appears at Pro-50–His-60. Residues Glu-51–Asn-53 and His-57–Ser-63 each bind ATP. 2 residues coordinate L-glutamine: Asp-83 and Tyr-228. ATP contacts are provided by residues Thr-247 and Arg-277–Leu-278. The 'KMSKS' region motif lies at Ile-284–Arg-288.

Belongs to the class-I aminoacyl-tRNA synthetase family. As to quaternary structure, monomer.

The protein localises to the cytoplasm. The enzyme catalyses tRNA(Gln) + L-glutamine + ATP = L-glutaminyl-tRNA(Gln) + AMP + diphosphate. The polypeptide is Glutamine--tRNA ligase (Pseudomonas syringae pv. tomato (strain ATCC BAA-871 / DC3000)).